We begin with the raw amino-acid sequence, 148 residues long: Aspartate carbamoyltransferase regulatory chain (148 aa).

Zn(2+)-binding residues include C106, C111, C134, and C137.

The protein belongs to the PyrI family. As to quaternary structure, contains catalytic and regulatory chains. The cofactor is Zn(2+).

In terms of biological role, involved in allosteric regulation of aspartate carbamoyltransferase. This Methanococcus maripaludis (strain DSM 14266 / JCM 13030 / NBRC 101832 / S2 / LL) protein is Aspartate carbamoyltransferase regulatory chain.